We begin with the raw amino-acid sequence, 267 residues long: MKKILLTVSLGLALSACATQGTVDKDAQITQDWSVEKLYAEAQDELNSSNYTRAVKLYEILESRFPTSRHAQQSQLDTAYAYYKDDEKDKALAAIDRFRRLHPQHPNMDYALYLRGLVLFNEDQSFLNKLASQDWSDRDPKANREAYQAFAELVQRFPNSKYAADATARMVKLVDALGGNEMSVARYYMKRGAYIAAANRAQKIIGSYQNTRYVEESLAILELAYKKLDKPRLAADTRRVLETNFPKSPFLKQPWRSDDMPWWRYWH.

The first 16 residues, 1–16 (MKKILLTVSLGLALSA), serve as a signal peptide directing secretion. C17 carries N-palmitoyl cysteine lipidation. Residue C17 is the site of S-diacylglycerol cysteine attachment.

Belongs to the BamD family. As to quaternary structure, part of the Bam complex.

It localises to the cell outer membrane. Functionally, part of the outer membrane protein assembly complex, which is involved in assembly and insertion of beta-barrel proteins into the outer membrane. Required for efficient transformation of Neisseria meningitidis by species-related DNA. This is Outer membrane protein assembly factor BamD from Neisseria meningitidis serogroup B (strain ATCC BAA-335 / MC58).